Reading from the N-terminus, the 724-residue chain is Solute carrier organic anion transporter family member 4C1 (724 aa).

The segment at 1 to 80 (MQGSKGVENP…PPGSQLSELE (80 aa)) is disordered. At 1–101 (MQGSKGVENP…QCLQRCNNPK (101 aa)) the chain is on the cytoplasmic side. Residues Ser15 and Ser16 each carry the phosphoserine modification. A Phosphothreonine modification is found at Thr19. Ser24, Ser26, and Ser28 each carry phosphoserine. Over residues 25–46 (ASPSQVEVSAVASRNQNGGSQP) the composition is skewed to polar residues. A helical membrane pass occupies residues 102 to 122 (GFLLHYCLLALTQGIVVNGLV). At 123-141 (NISISTIEKRYEMKSSLTG) the chain is on the extracellular side. The helical transmembrane segment at 142–162 (LISSSYDISFCVLSLFVSFFG) threads the bilayer. The Cytoplasmic portion of the chain corresponds to 163–168 (ERGHKP). Residues 169–193 (RWLAFASFMIGLGALVFSLPHFFSG) traverse the membrane as a helical segment. Topologically, residues 194 to 218 (RYELGTIFEDTCLTRNSTRCASSTS) are extracellular. The helical transmembrane segment at 219-249 (LLSNYFYVFVLGQLLLGTGGTPLYTLGTAFI) threads the bilayer. The Cytoplasmic segment spans residues 250–269 (DDSVPTHKSSLYIGIGYSMS). A helical membrane pass occupies residues 270–290 (ILGPAIGYVLGGQLLTMYIDV). The Extracellular segment spans residues 291-306 (AMGQSSDLTEDDPRWL). A helical membrane pass occupies residues 307 to 331 (GAWWIGFLLAWLFAWSLIMPFSCFP). Residues 332-376 (KHLPGTAKIQAGKTSQTHQNNSTSFQHMDENFGKSIKDFPTAVKN) lie on the Cytoplasmic side of the membrane. A helical transmembrane segment spans residues 377–398 (LMRNTVFICLVLSTTSEALVTT). The Extracellular segment spans residues 399–418 (GFATFLPKFIENQFGLTSSF). The helical transmembrane segment at 419 to 442 (AATLGGAVLIPGAALGQILGGVLV) threads the bilayer. The Cytoplasmic segment spans residues 443–446 (SKFK). Residues 447–470 (MKCKNTMKFALCTSGVALMLSFVF) form a helical membrane-spanning segment. Over 471–580 (IYAKCENGPF…KTQCSNLPIF (110 aa)) the chain is Extracellular. The Kazal-like domain maps to 494 to 549 (GNLTAPCNANCNCLRSYYYPLCGSDGVQYFSPCFAGCLNSVSNRKPKAYYNCSCIE). 3 disulfides stabilise this stretch: Cys500–Cys530, Cys506–Cys526, and Cys515–Cys547. The helical transmembrane segment at 581–603 (LGIFFITVIFTFMAGTPITVSIL) threads the bilayer. Over 604–612 (RCVNHRQRS) the chain is Cytoplasmic. The chain crosses the membrane as a helical span at residues 613-638 (LALGVQFMLLRLLGTIPGPIIFGVTI). The Extracellular portion of the chain corresponds to 639–672 (DSTCVLWDINECGTKGACWIYDNIRMAHMLVAIS). A helical membrane pass occupies residues 673–690 (VTCKVITIFFNGLAIVLY). At 691-724 (KPPPPGTEVSFQSQNVVVSTITVEEDLNKIENEG) the chain is on the cytoplasmic side.

This sequence belongs to the organo anion transporter (TC 2.A.60) family. In terms of tissue distribution, predominantly expressed in kidney and lung but also weakly expressed in brain. Localizes primarily in the proximal straight tubules, the S3 fraction of the nephron.

It is found in the basolateral cell membrane. It localises to the apical cell membrane. It carries out the reaction estrone 3-sulfate(out) = estrone 3-sulfate(in). It catalyses the reaction L-thyroxine(out) = L-thyroxine(in). The catalysed reaction is 3,3',5-triiodo-L-thyronine(out) = 3,3',5-triiodo-L-thyronine(in). The enzyme catalyses chenodeoxycholate(out) = chenodeoxycholate(in). It carries out the reaction glycocholate(out) = glycocholate(in). It catalyses the reaction L-homoarginine(in) = L-homoarginine(out). The catalysed reaction is L-arginine(in) = L-arginine(out). The enzyme catalyses N(omega),N(omega)-dimethyl-L-arginine(out) = N(omega),N(omega)-dimethyl-L-arginine(in). In terms of biological role, mediates the transport of organic anions such as steroids (estrone 3-sulfate, chenodeoxycholate, glycocholate) and thyroid hormones (3,3',5-triiodo-L-thyronine (T3), L-thyroxine (T4)), in the kidney. Capable of transporting cAMP and pharmacological substances such as digoxin, ouabain and methotrexate. Transport is independent of sodium, chloride ion, and ATP. Transport activity is stimulated by an acidic extracellular environment due to increased substrate affinity to the transporter. The driving force for this transport activity is currently not known. The role of hydrogencarbonate (HCO3(-), bicarbonate) as the probable counteranion that exchanges for organic anions is still not well defined. Functions as an uptake transporter at the apical membrane, suggesting a role in renal reabsorption. Involved in the renal secretion of the uremic toxin ADMA (N(omega),N(omega)-dimethyl-L-arginine or asymmetrical dimethylarginine), which is associated to cardiovascular events and mortality, and the structurally related amino acids L-arginine and L-homoarginine (a cardioprotective biomarker). Can act bidirectionally, suggesting a dual protective role of this transport protein; exporting L-homoarginine after being synthesized in proximal tubule cells, and mediating uptake of ADMA from the blood into proximal tubule cells where it is degraded by the enzyme dimethylarginine dimethylaminohydrolase 1 (DDAH1). May be involved in sperm maturation by enabling directed movement of organic anions and compounds within or between cells. This ion-transporting process is important to maintain the strict epididymal homeostasis necessary for sperm maturation. May have a role in secretory functions since seminal vesicle epithelial cells are assumed to secrete proteins involved in decapacitation by modifying surface proteins to facilitate the acquisition of the ability to fertilize the egg. The polypeptide is Solute carrier organic anion transporter family member 4C1 (Rattus norvegicus (Rat)).